We begin with the raw amino-acid sequence, 628 residues long: EF-hand calcium-binding domain-containing protein 7 (628 aa).

Residues 1-22 show a composition bias toward polar residues; sequence MASNPGSDAALGTQNPLLSGSP. Residues 1–24 form a disordered region; sequence MASNPGSDAALGTQNPLLSGSPRT. 2 consecutive EF-hand domains span residues 102–137 and 138–173; these read TSKA…RGEK and MTQE…TSEQ. The segment at 192–231 is disordered; the sequence is QFGSHMEGSPERGPSPAPKPSPRVIRKNDQETFSSKGDTS. Phosphoserine is present on residues S200 and S212. A compositionally biased stretch (polar residues) spans 222-231; it reads ETFSSKGDTS. One can recognise an EF-hand 3 domain in the interval 402–437; that stretch reads EFRSTLSEIFEVIDLDGNGLISLEEYNFFELRTSGE. Ca(2+) contacts are provided by D415, D417, N419, and E426.

Component of the EvC complex composed of EFCAB7, IQCE, EVC2 and EVC; built from two subcomplexes, EVC2:EVC and EFCAB7:IQCE. Interacts (via EF-hand 1 and 2) with IQCE (via N-terminus); this interaction anchors the EVC-EVC2 complex in a signaling microdomain at the base of cilia and stimulates the Hedgehog (Hh) pathway. Interacts with EVC2 (via N-terminal end). Interacts with EVC.

It is found in the cell projection. The protein resides in the cilium membrane. Component of the EvC complex that positively regulates ciliary Hedgehog (Hh) signaling. Required for the localization of the EVC2:EVC subcomplex at the base of primary cilia. This chain is EF-hand calcium-binding domain-containing protein 7 (Efcab7), found in Mus musculus (Mouse).